A 610-amino-acid polypeptide reads, in one-letter code: Zinc metalloproteinase-disintegrin-like VAP1 (610 aa).

The first 20 residues, 1-20 (MIQVLLVTISLAVFPYQGSS), serve as a signal peptide directing secretion. The propeptide occupies 21-189 (VILESGNVND…KKASQSNLTP (169 aa)). The residue at position 190 (Glu-190) is a Pyrrolidone carboxylic acid (Glu). Positions 199–395 (KYVKLFLVAD…NMPQCILKKP (197 aa)) constitute a Peptidase M12B domain. N-linked (GlcNAc...) asparagine glycosylation is present at Asn-218. 3 disulfide bridges follow: Cys-310–Cys-390, Cys-350–Cys-374, and Cys-352–Cys-357. His-335 lines the Zn(2+) pocket. A Metal-binding motif is present at residues 335-346 (HEMGHNLGMDHD). The Proton acceptor role is filled by Glu-336. Zn(2+) is bound by residues His-339 and His-345. One can recognise a Disintegrin domain in the interval 403-488 (PAVCGNYFVE…AECTDRFQRN (86 aa)). 6 residues coordinate Ca(2+): Val-405, Asn-408, Phe-410, Glu-412, Glu-415, and Asp-418. 14 disulfides stabilise this stretch: Cys-406–Cys-435, Cys-417–Cys-430, Cys-419–Cys-425, Cys-429–Cys-452, Cys-443–Cys-449, Cys-448–Cys-474, Cys-461–Cys-481, Cys-468–Cys-499, Cys-492–Cys-504, Cys-511–Cys-561, Cys-526–Cys-572, Cys-539–Cys-549, Cys-556–Cys-598, and Cys-592–Cys-603. The D/ECD-tripeptide motif lies at 467 to 469 (ECD). Ca(2+) contacts are provided by Asp-469, Met-470, Asp-472, Asp-483, and Arg-484.

This sequence belongs to the venom metalloproteinase (M12B) family. P-III subfamily. P-IIIc sub-subfamily. In terms of assembly, homodimer; disulfide-linked. The cofactor is Zn(2+). Post-translationally, the N-terminus is blocked. Expressed by the venom gland.

It is found in the secreted. Its activity is regulated as follows. Inhibited by EDTA and EGTA, but not by PMSF. In terms of biological role, zinc metalloprotease that has fibrinogenolytic and hemorrhagic activities. It induces apoptosis in vascular endothelial cells (VEC), without degrading extracellular matrix (it cannot cleave collagen) or inhibiting adhesion of VEC. VAP1-induced apoptosis is inhibited by antibodies for integrin alpha-3, alpha-6, beta-1 and CD9. Apoptosis is accompanied by severe cell fragmentation, which is controlled by caspases. This Crotalus atrox (Western diamondback rattlesnake) protein is Zinc metalloproteinase-disintegrin-like VAP1.